We begin with the raw amino-acid sequence, 137 residues long: Small ribosomal subunit protein eS17 (137 aa).

It belongs to the eukaryotic ribosomal protein eS17 family. Component of the small ribosomal subunit. Mature ribosomes consist of a small (40S) and a large (60S) subunit. The 40S subunit contains about 32 different proteins and 1 molecule of RNA (18S). The 60S subunit contains 45 different proteins and 3 molecules of RNA (25S, 5.8S and 5S).

Its subcellular location is the cytoplasm. Its function is as follows. Component of the ribosome, a large ribonucleoprotein complex responsible for the synthesis of proteins in the cell. The small ribosomal subunit (SSU) binds messenger RNAs (mRNAs) and translates the encoded message by selecting cognate aminoacyl-transfer RNA (tRNA) molecules. The large subunit (LSU) contains the ribosomal catalytic site termed the peptidyl transferase center (PTC), which catalyzes the formation of peptide bonds, thereby polymerizing the amino acids delivered by tRNAs into a polypeptide chain. The nascent polypeptides leave the ribosome through a tunnel in the LSU and interact with protein factors that function in enzymatic processing, targeting, and the membrane insertion of nascent chains at the exit of the ribosomal tunnel. The protein is Small ribosomal subunit protein eS17 (RPS17B) of Candida albicans (strain SC5314 / ATCC MYA-2876) (Yeast).